Reading from the N-terminus, the 1319-residue chain is Girdin homolog (1319 aa).

In terms of domain architecture, Calponin-homology (CH) spans 6–118 (ENWSHPLAFW…KLLLLLLGCA (113 aa)). Coiled-coil stretches lie at residues 141-173 (ELAACIQKLTESDEIVQNLEDFERRKMKETDEV), 218-690 (TSEL…ADLI), and 732-1096 (KRER…KKST). Residues 166-222 (KMKETDEVGGGGGSIEDVDSDDMESSTTSSSNGEIAIKQQDQSFLMSRSTSPTSELR) form a disordered region. Positions 204 to 222 (QQDQSFLMSRSTSPTSELR) are enriched in polar residues. 2 disordered regions span residues 1112-1236 (INRR…SPAH) and 1289-1308 (NVNLPQNPPDLPENSDLKPN). The segment covering 1118–1131 (TSNGGSTTEDSSVY) has biased composition (polar residues).

Belongs to the CCDC88 family. Expressed in AQR and PQR gas-sensing neurons in hermaphrodites (at protein level).

The protein localises to the cytoplasm. It localises to the cytoskeleton. The protein resides in the cilium basal body. Its subcellular location is the microtubule organizing center. It is found in the centrosome. The protein localises to the centriole. Its function is as follows. Scaffolding protein that plays a role in ciliogenesis, cilium positioning and dendrite anchoring in sensory amphid neurons including AWB, AWA, AWC, ADL and ASI, the phasmid neurons PHA and PHB and the gas sensing neurons AQR, PQR, URX and BAG. Its role in cilium positioning may be through regulation of the localization of cell adhesion proteins such as the apical junction protein ajm-1, and the ciliary scaffolding protein Rootletin/che-10. Plays a more prominent role in regulating dendrite morphogenesis in AQR than in PQR neurons. Regulates localization of hmr-1 to the distal AQR dendrite. During embryonic elongation, required for the anchoring of URX and BAG dendrites to the presumptive nose. The polypeptide is Girdin homolog (Caenorhabditis elegans).